The sequence spans 115 residues: Viral Lymphotactin (115 aa).

The signal sequence occupies residues Met1–Ser19. Cysteines 30 and 67 form a disulfide.

The protein belongs to the intercrine gamma family. Interacts with host XCR1. Post-translationally, N-glycosylated and O-glycosylated.

The protein resides in the secreted. Its function is as follows. Chemoattractant for CD4-dendritic cells, but not for CD4+ dendritic cells, T-cells or B-cells. The protein is Viral Lymphotactin (vXCL1) of Rat cytomegalovirus (isolate England) (RCMV-E).